We begin with the raw amino-acid sequence, 643 residues long: MYSAGPPAVPAPRRCRRPPPGRPMQPPRPPAPAPVPAARPPPPAPGPRPRVAVKMAFRKAYSIKDKLQAIERVKGGERQASVCRDFGVPGGTLRGWLKDEPKLRWFLEQLGGEVGTQRKKMRLANEEEIDRAVYSWFLALRQHGVPLSGPLIQAQAEAFARQIYGPECTFKASHGWFWRWQKRHGISSQRIYGEAEPVAAGPAPGPPVKQEPAQPTRAGPLPDRAASTPAPAEGGYGDEQIYNANVTGLYWKLLPEQAAPVGAGGCGRRWRGDRVTVLLAANLTGSHKLKPLVIGQLPDPPSLRHHNQDKFPASYRYSPDAWLSRPLLRGWFFEEFVPGVRRYLRRSCLQQKAVLLVAHPPCPSSEARMPALEESEETRRRCRPEPTGPPEELQTPDGAVRVLFLCRGSGRAHIPAPLEQGVVAAFKQLYKRELLRLAVSCAGGSPLDFMRSFMLKDMLYLAGLSWDLVQAGSIERCWLLGLRAAFEPRPVEERAGQPAGQAEEAAEHSRVLSDLTHLAALAYKRLAPEEVAEWLHLDDDGGLPDGGREDWGPSRPPVLVPGGPLLPASLPSAVAGGAEEEEEEAIPTAGEAVRGLETALRWLETQDPREVGPLKLVQLRSLISTARRLGGIGPSPMVPDDGL.

The tract at residues 1 to 50 (MYSAGPPAVPAPRRCRRPPPGRPMQPPRPPAPAPVPAARPPPPAPGPRPR) is disordered. Over residues 20 to 48 (PGRPMQPPRPPAPAPVPAARPPPPAPGPR) the composition is skewed to pro residues. The HTH psq-type domain occupies 52–103 (AVKMAFRKAYSIKDKLQAIERVKGGERQASVCRDFGVPGGTLRGWLKDEPKL). DNA-binding regions (H-T-H motif) lie at residues 79–99 (QASV…WLKD) and 150–183 (PLIQ…WQKR). The 74-residue stretch at 117-190 (QRKKMRLANE…QKRHGISSQR (74 aa)) folds into the HTH CENPB-type domain. The tract at residues 197 to 236 (PVAAGPAPGPPVKQEPAQPTRAGPLPDRAASTPAPAEGGY) is disordered. The 121-residue stretch at 238-358 (DEQIYNANVT…LQQKAVLLVA (121 aa)) folds into the DDE-1 domain. The tract at residues 366 to 395 (EARMPALEESEETRRRCRPEPTGPPEELQT) is disordered.

The protein belongs to the tigger transposable element derived protein family.

It localises to the nucleus. The sequence is that of Tigger transposable element-derived protein 5 (TIGD5) from Bos taurus (Bovine).